Reading from the N-terminus, the 3010-residue chain is Probable polyketide synthase 2 (3010 aa).

The 424-residue stretch at 9–432 (SRDVAVIGIG…GSNACLLLSE (424 aa)) folds into the Ketosynthase family 3 (KS3) domain. Active-site for beta-ketoacyl synthase activity residues include C174, H313, and H353. Residues 629–662 (GINPSINVGHSFGEISSACCSGMLDLETACFIVY) are acyl/malonyl transferase. S639 functions as the For acyl/malonyl transferase activity in the catalytic mechanism. An N-terminal hotdog fold region spans residues 944–1063 (ATQLGYRNDV…ARFSVLKHNS (120 aa)). A PKS/mFAS DH domain is found at 944–1235 (ATQLGYRNDV…YSSISTDIKN (292 aa)). The Proton acceptor; for dehydratase activity role is filled by H976. Residues 1080–1235 (NWTTIKRKEF…YSSISTDIKN (156 aa)) are C-terminal hotdog fold. The active-site Proton donor; for dehydratase activity is the D1146. Residues 2482–2559 (DNELSIRDDI…QLIQAVIQAV (78 aa)) form the Carrier domain. An O-(pantetheine 4'-phosphoryl)serine modification is found at S2519.

Requires pantetheine 4'-phosphate as cofactor.

Its function is as follows. Probable polyketide synthase. This is Probable polyketide synthase 2 (pks2) from Dictyostelium discoideum (Social amoeba).